We begin with the raw amino-acid sequence, 128 residues long: Small ribosomal subunit protein eS8 (128 aa).

Residues 1–41 are disordered; the sequence is MSYYQGNDSRKITGGQKGKNRDKRKYELGSPPTETKISDKD.

This sequence belongs to the eukaryotic ribosomal protein eS8 family. In terms of assembly, part of the 30S ribosomal subunit.

The protein is Small ribosomal subunit protein eS8 of Sulfolobus acidocaldarius (strain ATCC 33909 / DSM 639 / JCM 8929 / NBRC 15157 / NCIMB 11770).